The following is a 600-amino-acid chain: Translation initiation factor IF-2 (600 aa).

Positions 112–279 constitute a tr-type G domain; that stretch reads ERAPIITVMG…AINLQAEILE (168 aa). The segment at 121–128 is G1; it reads GHVDHGKT. 121–128 provides a ligand contact to GTP; sequence GHVDHGKT. The segment at 146 to 150 is G2; sequence GITQH. The segment at 167 to 170 is G3; it reads DTPG. Residues 167–171 and 221–224 each bind GTP; these read DTPGH and NKMD. Residues 221–224 form a G4 region; it reads NKMD. Residues 257 to 259 form a G5 region; it reads SAL.

The protein belongs to the TRAFAC class translation factor GTPase superfamily. Classic translation factor GTPase family. IF-2 subfamily.

The protein localises to the cytoplasm. One of the essential components for the initiation of protein synthesis. Protects formylmethionyl-tRNA from spontaneous hydrolysis and promotes its binding to the 30S ribosomal subunits. Also involved in the hydrolysis of GTP during the formation of the 70S ribosomal complex. The polypeptide is Translation initiation factor IF-2 (Mycoplasma mobile (strain ATCC 43663 / 163K / NCTC 11711) (Mesomycoplasma mobile)).